We begin with the raw amino-acid sequence, 424 residues long: Elongation factor 1-alpha (424 aa).

Residues 5 to 223 form the tr-type G domain; it reads KPHMNLVIIG…NALQVPAKPV (219 aa). The segment at 14–21 is G1; it reads GHVDHGKS. 14 to 21 contributes to the GTP binding site; sequence GHVDHGKS. A Mg(2+)-binding site is contributed by S21. Residues 70–74 are G2; it reads GVTID. The interval 91-94 is G3; sequence DAPG. GTP is bound by residues 91–95 and 148–151; these read DAPGH and NKMD. Residues 148-151 are G4; it reads NKMD. The tract at residues 187-189 is G5; sequence SGY.

This sequence belongs to the TRAFAC class translation factor GTPase superfamily. Classic translation factor GTPase family. EF-Tu/EF-1A subfamily.

The protein localises to the cytoplasm. The enzyme catalyses GTP + H2O = GDP + phosphate + H(+). Its function is as follows. GTP hydrolase that promotes the GTP-dependent binding of aminoacyl-tRNA to the A-site of ribosomes during protein biosynthesis. This Picrophilus torridus (strain ATCC 700027 / DSM 9790 / JCM 10055 / NBRC 100828 / KAW 2/3) protein is Elongation factor 1-alpha.